A 280-amino-acid chain; its full sequence is Band 7 protein AGAP004871 (280 aa).

Residues 23–43 traverse the membrane as a helical segment; it reads ILIFLSWVLVVLTMPFSLLVC.

This sequence belongs to the band 7/mec-2 family.

The protein resides in the membrane. The sequence is that of Band 7 protein AGAP004871 from Anopheles gambiae (African malaria mosquito).